Here is a 440-residue protein sequence, read N- to C-terminus: Protein disulfide-isomerase A6 (440 aa).

Positions 1–19 (MALLVLGLVSCTFFLAVNG) are cleaved as a signal peptide. 2 consecutive Thioredoxin domains span residues 20–133 (LYSS…ALRQ) and 154–287 (SDSS…EDIA). Active-site nucleophile residues include Cys-55 and Cys-58. Cys-55 and Cys-58 form a disulfide bridge. Ser-129 bears the Phosphoserine mark. The segment at 141 to 161 (GRSGGYSSGKQGRSDSSSKKD) is disordered. Over residues 152–161 (GRSDSSSKKD) the composition is skewed to basic and acidic residues. Ser-156 carries the phosphoserine; by FAM20C modification. Residue Ser-158 is modified to Phosphoserine. Residues Cys-190 and Cys-193 each act as nucleophile in the active site. A disulfide bond links Cys-190 and Cys-193. A Phosphoserine modification is found at Ser-428. The Prevents secretion from ER motif lies at 437–440 (KDEL).

Belongs to the protein disulfide isomerase family. Part of a large chaperone multiprotein complex comprising DNAJB11, HSP90B1, HSPA5, HYOU, PDIA2, PDIA4, PDIA6, PPIB, SDF2L1, UGGT1 and very small amounts of ERP29, but not, or at very low levels, CALR nor CANX. Interacts with MICA on the surface of tumor cells, leading to MICA disulfide bond reduction which is required for its release from tumor cells. Interacts with ITGB3 following platelet stimulation. Interacts with ERN1; the interaction is direct. Interacts with EIF2AK3. In terms of tissue distribution, expressed in platelets (at protein level).

It localises to the endoplasmic reticulum lumen. The protein localises to the cell membrane. The protein resides in the melanosome. The catalysed reaction is Catalyzes the rearrangement of -S-S- bonds in proteins.. May function as a chaperone that inhibits aggregation of misfolded proteins. Negatively regulates the unfolded protein response (UPR) through binding to UPR sensors such as ERN1, which in turn inactivates ERN1 signaling. May also regulate the UPR via the EIF2AK3 UPR sensor. Plays a role in platelet aggregation and activation by agonists such as convulxin, collagen and thrombin. The chain is Protein disulfide-isomerase A6 (PDIA6) from Homo sapiens (Human).